Here is a 364-residue protein sequence, read N- to C-terminus: DNA replication and repair protein RecF (364 aa).

30-37 (GNNAQGKT) contributes to the ATP binding site.

Belongs to the RecF family.

Its subcellular location is the cytoplasm. The RecF protein is involved in DNA metabolism; it is required for DNA replication and normal SOS inducibility. RecF binds preferentially to single-stranded, linear DNA. It also seems to bind ATP. This is DNA replication and repair protein RecF from Streptococcus uberis (strain ATCC BAA-854 / 0140J).